The sequence spans 473 residues: Ribulose bisphosphate carboxylase large chain (473 aa).

Substrate-binding residues include N116 and T166. Residue K168 is the Proton acceptor of the active site. K170 is a binding site for substrate. Positions 194, 196, and 197 each coordinate Mg(2+). K194 is subject to N6-carboxylysine. Catalysis depends on H287, which acts as the Proton acceptor. The substrate site is built by R288, H320, and S372.

The protein belongs to the RuBisCO large chain family. Type I subfamily. As to quaternary structure, heterohexadecamer of 8 large chains and 8 small chains. Requires Mg(2+) as cofactor.

It catalyses the reaction 2 (2R)-3-phosphoglycerate + 2 H(+) = D-ribulose 1,5-bisphosphate + CO2 + H2O. The enzyme catalyses D-ribulose 1,5-bisphosphate + O2 = 2-phosphoglycolate + (2R)-3-phosphoglycerate + 2 H(+). Its function is as follows. RuBisCO catalyzes two reactions: the carboxylation of D-ribulose 1,5-bisphosphate, the primary event in carbon dioxide fixation, as well as the oxidative fragmentation of the pentose substrate. Both reactions occur simultaneously and in competition at the same active site. In Hydrogenophaga pseudoflava (Pseudomonas carboxydoflava), this protein is Ribulose bisphosphate carboxylase large chain.